Reading from the N-terminus, the 94-residue chain is Small ribosomal subunit protein uS19c (94 aa).

It belongs to the universal ribosomal protein uS19 family.

The protein resides in the plastid. Its function is as follows. Protein S19 forms a complex with S13 that binds strongly to the 16S ribosomal RNA. In Epifagus virginiana (Beechdrops), this protein is Small ribosomal subunit protein uS19c (rps19).